A 374-amino-acid polypeptide reads, in one-letter code: uncharacterized protein (374 aa).

The interval 197–223 is disordered; it reads GTTTTTNNNNNNNNNNNNNNNNGTNIT. Residues 198-223 show a composition bias toward low complexity; that stretch reads TTTTTNNNNNNNNNNNNNNNNGTNIT. The stretch at 302–342 forms a coiled coil; it reads DEVSDCNDINTNLKKKRKQQEQLQIEKEKKLLTIQQEQTKI.

This is an uncharacterized protein from Dictyostelium discoideum (Social amoeba).